Here is a 160-residue protein sequence, read N- to C-terminus: Protein-export protein SecB (160 aa).

It belongs to the SecB family. Homotetramer, a dimer of dimers. One homotetramer interacts with 1 SecA dimer.

The protein localises to the cytoplasm. Its function is as follows. One of the proteins required for the normal export of preproteins out of the cell cytoplasm. It is a molecular chaperone that binds to a subset of precursor proteins, maintaining them in a translocation-competent state. It also specifically binds to its receptor SecA. In Nitrosomonas eutropha (strain DSM 101675 / C91 / Nm57), this protein is Protein-export protein SecB.